A 317-amino-acid polypeptide reads, in one-letter code: Acetyl-coenzyme A carboxylase carboxyl transferase subunit alpha (317 aa).

One can recognise a CoA carboxyltransferase C-terminal domain in the interval 31–292; sequence RFEPELAQLE…DKALWATLTS (262 aa).

This sequence belongs to the AccA family. In terms of assembly, acetyl-CoA carboxylase is a heterohexamer composed of biotin carboxyl carrier protein (AccB), biotin carboxylase (AccC) and two subunits each of ACCase subunit alpha (AccA) and ACCase subunit beta (AccD).

It localises to the cytoplasm. It catalyses the reaction N(6)-carboxybiotinyl-L-lysyl-[protein] + acetyl-CoA = N(6)-biotinyl-L-lysyl-[protein] + malonyl-CoA. It participates in lipid metabolism; malonyl-CoA biosynthesis; malonyl-CoA from acetyl-CoA: step 1/1. Functionally, component of the acetyl coenzyme A carboxylase (ACC) complex. First, biotin carboxylase catalyzes the carboxylation of biotin on its carrier protein (BCCP) and then the CO(2) group is transferred by the carboxyltransferase to acetyl-CoA to form malonyl-CoA. The sequence is that of Acetyl-coenzyme A carboxylase carboxyl transferase subunit alpha from Sorangium cellulosum (strain So ce56) (Polyangium cellulosum (strain So ce56)).